The primary structure comprises 211 residues: MRNIQIALTKGRLEKHVIPLFEQIGIDCSELKNKGRKLVFQSKNTNVSFILVKAVDVATYVEHGVADIGIVGKDILMENEKDIYEMLDLGVGICKFCVASIPTYNPKSYRKKRIATKYPHITSTYFHDKGEDVEIIKIEGSVEIAPLLGLADAIVDIVETGKTLQENGLIVFEEMHSISARMIVNKAALKTKKDEIFSIVNMMEQEILSGK.

This sequence belongs to the ATP phosphoribosyltransferase family. Short subfamily. In terms of assembly, heteromultimer composed of HisG and HisZ subunits.

The protein localises to the cytoplasm. It carries out the reaction 1-(5-phospho-beta-D-ribosyl)-ATP + diphosphate = 5-phospho-alpha-D-ribose 1-diphosphate + ATP. It participates in amino-acid biosynthesis; L-histidine biosynthesis; L-histidine from 5-phospho-alpha-D-ribose 1-diphosphate: step 1/9. In terms of biological role, catalyzes the condensation of ATP and 5-phosphoribose 1-diphosphate to form N'-(5'-phosphoribosyl)-ATP (PR-ATP). Has a crucial role in the pathway because the rate of histidine biosynthesis seems to be controlled primarily by regulation of HisG enzymatic activity. This Bacillus cereus (strain G9842) protein is ATP phosphoribosyltransferase.